The chain runs to 164 residues: Mineralocorticoid receptor (164 aa).

One can recognise an NR LBD domain in the interval 1–162 (QYSWMCLSSF…EFPRCWWRSS (162 aa)). 2 residues coordinate 21-hydroxyprogesterone: Arg15 and Thr143. Aldosterone-binding residues include Arg15 and Thr143. Arg15 and Thr143 together coordinate progesterone.

It belongs to the nuclear hormone receptor family. NR3 subfamily. As to quaternary structure, heteromultimeric cytoplasmic complex with HSP90, HSP70, and FKBP4, in the absence of ligand. After ligand binding, it translocates to the nucleus and binds to DNA as a homodimer and as a heterodimer with NR3C1. Binds the coactivator NCOA2. May interact with HSD11B2 in the absence of ligand. Binds the coactivators NCOA1, TIF1 and NRIP1. Phosphorylated.

The protein resides in the cytoplasm. It localises to the nucleus. Its subcellular location is the endoplasmic reticulum membrane. Functionally, receptor for both mineralocorticoids (MC) such as aldosterone and glucocorticoids (GC) such as corticosterone or cortisol. Binds to mineralocorticoid response elements (MRE) and transactivates target genes. The effect of MC is to increase ion and water transport and thus raise extracellular fluid volume and blood pressure and lower potassium levels. This is Mineralocorticoid receptor (NR3C2) from Sus scrofa (Pig).